The primary structure comprises 175 residues: Transcriptional regulator GadE (175 aa).

In terms of domain architecture, HTH luxR-type spans histidine 109 to tyrosine 174. Residues glutamate 133–phenylalanine 152 constitute a DNA-binding region (H-T-H motif).

Its function is as follows. Regulates the expression of several genes involved in acid resistance. Required for the expression of gadA and gadBC, among others, regardless of media or growth conditions. Binds directly to the 20 bp GAD box found in the control regions of both loci. Could be involved in the regulation of the genes coding for the type III secretion system in enterohaemorragic strains. This chain is Transcriptional regulator GadE (gadE), found in Escherichia coli O157:H7.